A 69-amino-acid polypeptide reads, in one-letter code: Toxin Lc b (69 aa).

Cystine bridges form between C3–C20, C13–C41, C45–C56, and C57–C62.

The protein belongs to the three-finger toxin family. Long-chain subfamily. Type II alpha-neurotoxin sub-subfamily. Expressed by the venom gland.

It localises to the secreted. In terms of biological role, binds with high affinity to muscular nicotinic acetylcholine receptors (nAChRs), whereas it binds with a low affinity to neuronal alpha-7/CHRNA7 nAChRs. The sequence is that of Toxin Lc b from Laticauda colubrina (Yellow-lipped sea krait).